A 508-amino-acid chain; its full sequence is Amphoterin-induced protein 3 (508 aa).

The N-terminal stretch at 1–19 (MAWLVLSGILLCMLGAGLG) is a signal peptide. At 20-383 (TSDLEDVLPP…ARPEPETFNT (364 aa)) the chain is on the extracellular side. The LRRNT domain maps to 25-61 (DVLPPAPHNCPDICICAADVLSCAGRGLQDLPVALPT). Intrachain disulfides connect Cys-34-Cys-40 and Cys-38-Cys-47. 6 LRR repeats span residues 62–83 (TAAE…WLAP), 86–107 (RLRA…AFTN), 110–133 (GLRT…DGLE), 134–155 (ELEK…AFQG), 158–178 (MLSH…NHLH), and 184–207 (RLRT…AALP). Residue Asn-107 is glycosylated (N-linked (GlcNAc...) asparagine). Asn-142 carries an N-linked (GlcNAc...) asparagine glycan. Positions 219–275 (NPLPCDCSLYHLLRRWHQRGLSALHDFEREYTCLVFKVSESRVRFFEHSRVFKNCSV) constitute an LRRCT domain. 3 disulfides stabilise this stretch: Cys-223/Cys-251, Cys-225/Cys-273, and Cys-300/Cys-352. Asn-272, Asn-301, Asn-362, and Asn-368 each carry an N-linked (GlcNAc...) asparagine glycan. Positions 279-370 (PGLELPEEQL…HNQTLEYNVS (92 aa)) constitute an Ig-like C2-type domain. Residues 384–404 (GFTTLLGCIVGLVLVLLYLFA) form a helical membrane-spanning segment. Topologically, residues 405–508 (PPCRGCCHCC…STGSEGLVMS (104 aa)) are cytoplasmic.

This sequence belongs to the immunoglobulin superfamily. AMIGO family. In terms of assembly, binds AMIGO1 or AMIGO2. As to expression, ubiquitous.

It localises to the membrane. In terms of biological role, may mediate heterophilic cell-cell interaction. May contribute to signal transduction through its intracellular domain. The polypeptide is Amphoterin-induced protein 3 (Mus musculus (Mouse)).